We begin with the raw amino-acid sequence, 170 residues long: Protein SprT (170 aa).

The region spanning 22–163 is the SprT-like domain; the sequence is LQQANLTLQT…RCRRCGKTLR (142 aa). His-78 serves as a coordination point for Zn(2+). Glu-79 is a catalytic residue. His-82 contributes to the Zn(2+) binding site.

This sequence belongs to the SprT family. Zn(2+) serves as cofactor.

It localises to the cytoplasm. The sequence is that of Protein SprT from Pectobacterium atrosepticum (strain SCRI 1043 / ATCC BAA-672) (Erwinia carotovora subsp. atroseptica).